We begin with the raw amino-acid sequence, 627 residues long: Dual specificity testis-specific protein kinase 1 (627 aa).

Residues 1 to 36 (MAGERPPLRGPGPGEAPGEGPGGAGGGPGRGRPSSY) form a disordered region. Residues 11–30 (PGPGEAPGEGPGGAGGGPGR) show a composition bias toward gly residues. In terms of domain architecture, Protein kinase spans 52 to 309 (FDCAEKIGAG…TEITQHLEQI (258 aa)). ATP-binding positions include 58-66 (IGAGFFSEV) and Lys-81. Asp-170 serves as the catalytic Proton acceptor. Residue Ser-215 is modified to Phosphoserine; by autocatalysis. The segment covering 316–330 (ATPLAKPPLTKAPLT) has biased composition (low complexity). 4 disordered regions span residues 316–373 (ATPL…SWGD), 436–485 (RCRS…GLAP), 500–519 (CSSASQPWSPRSGPPLNNNP), and 532–565 (REPWNRAQHSLPRAAALERTEPSPPPSAPREPEE). Arg-338 bears the Omega-N-methylarginine mark. A compositionally biased stretch (basic and acidic residues) spans 348 to 357 (PDPRLSRSRS). Residues 421–525 (VTTPDILVQP…NNNPPAVVVN (105 aa)) are required for interaction with YWHAB. Residues 528-625 (QGWAREPWNR…PTPSLQLPGA (98 aa)) form a required for interaction with PARVA region. The required for interaction with SPRED1 and SPRY2. Required for TESK1-mediated dephosphorylation of SPRY2 and SPRY2 inhibition of ERK phosphorylation stretch occupies residues 528–627 (QGWAREPWNR…PSLQLPGARS (100 aa)).

Belongs to the protein kinase superfamily. TKL Ser/Thr protein kinase family. As to quaternary structure, interacts (via both C- and N-termini) with SPRY4 (via C-terminus); the interaction inhibits TESK1 kinase activity. Interacts with TAOK1; the interaction inhibits TAOK1 kinase activity. Interacts (via C-terminus) with SPRED1 (via C-terminus); the interaction inhibits TESK1 kinase activity. Interacts (via C-terminus) with PARVA/PARVIN (via C-terminus); the interaction inhibits TESK1 kinase activity. Interacts with YWHAB/14-3-3 beta; the interaction is dependent on the phosphorylation of TESK1 Ser-439 and inhibits TESK1 kinase activity. Interacts with SPRY1, SPRY3 and SPRED2. Interacts (via C-terminus) with SPRY2 (via C-terminus); the interaction disrupts SPRY2 interaction with PPP2CA/PP2A-C, possibly by vesicular sequestration of SPRY2. Therefore dephosphorylation of SPRY2 by the serine/threonine-protein phosphatase 2A (PP2A) holoenzyme is lost, inhibiting its interaction with GRB2. It depends on Mg(2+) as a cofactor. Mn(2+) is required as a cofactor. Autophosphorylated on serine and tyrosine residues. In terms of tissue distribution, expressed in testes and brain (at protein level).

Its subcellular location is the cytoplasm. The protein resides in the perinuclear region. It is found in the cytoskeleton. It localises to the microtubule organizing center. The protein localises to the centrosome. Its subcellular location is the cell projection. The protein resides in the lamellipodium. It carries out the reaction L-seryl-[protein] + ATP = O-phospho-L-seryl-[protein] + ADP + H(+). The catalysed reaction is L-threonyl-[protein] + ATP = O-phospho-L-threonyl-[protein] + ADP + H(+). The enzyme catalyses L-tyrosyl-[protein] + ATP = O-phospho-L-tyrosyl-[protein] + ADP + H(+). With respect to regulation, activated by autophosphorylation on Ser-215. Kinase activity is inhibited by SPRED1. Functionally, dual specificity protein kinase activity catalyzing autophosphorylation and phosphorylation of exogenous substrates on both serine/threonine and tyrosine residues. Regulates the cellular cytoskeleton by enhancing actin stress fiber formation via phosphorylation of cofilin and by preventing microtubule breakdown via inhibition of TAOK1/MARKK kinase activity. Inhibits podocyte motility via regulation of actin cytoskeletal dynamics and phosphorylation of CFL1. Positively regulates integrin-mediated cell spreading, via phosphorylation of cofilin. Suppresses ciliogenesis via multiple pathways; phosphorylation of CFL1, suppression of ciliary vesicle directional trafficking to the ciliary base, and by facilitating YAP1 nuclear localization where it acts as a transcriptional corepressor of the TEAD4 target genes AURKA and PLK1. Probably plays a central role at and after the meiotic phase of spermatogenesis. This Mus musculus (Mouse) protein is Dual specificity testis-specific protein kinase 1 (Tesk1).